A 690-amino-acid chain; its full sequence is Rho guanine nucleotide exchange factor 4 (690 aa).

The interval 73-126 is ABR (APC-binding region) domain; the sequence is KTQRKKLQKQAHVERRLHIGAVHKDGVKCWRKTIITSPESLNLPRRSHPLSQSA. The disordered stretch occupies residues 113-145; it reads LNLPRRSHPLSQSAPTGLNHMGWPEHTPGTAMP. Positions 194-253 constitute an SH3 domain; that stretch reads GSVVCAEALWDHVTMDDQELGFKAGDVIEVMDATNREWWWGRVADGEGWFPASFVRLRVN. The segment at 257-282 is disordered; sequence PADDDAPLAGNSGAEDGGAEAQSSKD. The DH domain occupies 284-468; sequence MRTNVINEIL…KNVAQLINER (185 aa). The 108-residue stretch at 499–606 folds into the PH domain; that stretch reads ELIYSGELTR…WLKAFARERE (108 aa).

Isoform 3 interacts with RHOA and RAC1, and (via ABR domain) with APC. Found in a complex consisting of ARHGEF4, APC and CTNNB1. Expressed at high levels in the brain, skeletal muscle and testis and at low levels in the kidney, lung, small intestine, ovary and prostate. Expression is aberrantly enhanced in most colorectal tumors.

The protein localises to the cytoplasm. Its subcellular location is the cell projection. It is found in the ruffle membrane. Its function is as follows. Acts as a guanine nucleotide exchange factor (GEF) for RHOA, RAC1 and CDC42 GTPases. Binding of APC may activate RAC1 GEF activity. The APC-ARHGEF4 complex seems to be involved in cell migration as well as in E-cadherin-mediated cell-cell adhesion. Required for MMP9 up-regulation via the JNK signaling pathway in colorectal tumor cells. Involved in tumor angiogenesis and may play a role in intestinal adenoma formation and tumor progression. This is Rho guanine nucleotide exchange factor 4 (ARHGEF4) from Homo sapiens (Human).